The following is a 210-amino-acid chain: T-cell surface glycoprotein CD8 beta-2 chain (210 aa).

A signal peptide spans 1–18 (MRPRLWLLLAAQLTVLHG). The Ig-like V-type domain maps to 19 to 132 (NSVLQQTPAY…ELTFGKGTQL (114 aa)). Residues 19–170 (NSVLQQTPAY…ETQKGPLCSP (152 aa)) are Extracellular-facing. Residues Cys41 and Cys116 are joined by a disulfide bond. Residue Asn102 is glycosylated (N-linked (GlcNAc...) asparagine). Residues 171-191 (VTLGLLVAGVLVLLVSLGVAM) form a helical membrane-spanning segment. Residues 192–210 (HLCCRRRRARLRFMKQFYK) lie on the Cytoplasmic side of the membrane.

In terms of assembly, in general heterodimer of an alpha and a beta chain linked by two disulfide bonds.

The protein localises to the cell membrane. Its function is as follows. Identifies cytotoxic/suppressor T-cells that interact with MHC class I bearing targets. CD8 is thought to play a role in the process of T-cell mediated killing. In Homo sapiens (Human), this protein is T-cell surface glycoprotein CD8 beta-2 chain.